Here is a 91-residue protein sequence, read N- to C-terminus: Putative pterin-4-alpha-carbinolamine dehydratase (91 aa).

This sequence belongs to the pterin-4-alpha-carbinolamine dehydratase family.

The catalysed reaction is (4aS,6R)-4a-hydroxy-L-erythro-5,6,7,8-tetrahydrobiopterin = (6R)-L-erythro-6,7-dihydrobiopterin + H2O. In Halobacterium salinarum (strain ATCC 29341 / DSM 671 / R1), this protein is Putative pterin-4-alpha-carbinolamine dehydratase.